The chain runs to 379 residues: Chaperone protein DnaJ (379 aa).

The J domain maps to 5 to 70 (DFYEVLGVSR…QKRSAYDQYG (66 aa)). The CR-type zinc-finger motif lies at 134 to 212 (GCDKEIEVPT…CHGEGRVHKT (79 aa)). Positions 147, 150, 164, 167, 186, 189, 200, and 203 each coordinate Zn(2+). CXXCXGXG motif repeat units follow at residues 147 to 154 (CDPCEGTG), 164 to 171 (CSTCHGQG), 186 to 193 (CPTCHGKG), and 200 to 207 (CNSCHGEG).

The protein belongs to the DnaJ family. As to quaternary structure, homodimer. Requires Zn(2+) as cofactor.

It is found in the cytoplasm. Participates actively in the response to hyperosmotic and heat shock by preventing the aggregation of stress-denatured proteins and by disaggregating proteins, also in an autonomous, DnaK-independent fashion. Unfolded proteins bind initially to DnaJ; upon interaction with the DnaJ-bound protein, DnaK hydrolyzes its bound ATP, resulting in the formation of a stable complex. GrpE releases ADP from DnaK; ATP binding to DnaK triggers the release of the substrate protein, thus completing the reaction cycle. Several rounds of ATP-dependent interactions between DnaJ, DnaK and GrpE are required for fully efficient folding. Also involved, together with DnaK and GrpE, in the DNA replication of plasmids through activation of initiation proteins. In Aliivibrio fischeri (strain ATCC 700601 / ES114) (Vibrio fischeri), this protein is Chaperone protein DnaJ.